The following is a 273-amino-acid chain: F-actin-capping protein subunit alpha (273 aa).

It belongs to the F-actin-capping protein alpha subunit family. In terms of assembly, heterodimer of an alpha and a beta subunit.

Its subcellular location is the cytoplasm. It localises to the cytoskeleton. Its function is as follows. F-actin-capping proteins bind in a Ca(2+)-independent manner to the fast growing ends of actin filaments (barbed end) thereby blocking the exchange of subunits at these ends. Unlike other capping proteins (such as gelsolin and severin), these proteins do not sever actin filaments. This is F-actin-capping protein subunit alpha (cap1) from Emericella nidulans (strain FGSC A4 / ATCC 38163 / CBS 112.46 / NRRL 194 / M139) (Aspergillus nidulans).